A 203-amino-acid polypeptide reads, in one-letter code: Shikimate kinase (203 aa).

32–37 contributes to the ATP binding site; sequence GAGKTA. A Mg(2+)-binding site is contributed by Thr-36. Asp-54, Arg-78, and Gly-100 together coordinate substrate. Arg-138 contacts ATP. Arg-157 provides a ligand contact to substrate.

It belongs to the shikimate kinase family. Monomer. Requires Mg(2+) as cofactor.

The protein localises to the cytoplasm. It catalyses the reaction shikimate + ATP = 3-phosphoshikimate + ADP + H(+). The protein operates within metabolic intermediate biosynthesis; chorismate biosynthesis; chorismate from D-erythrose 4-phosphate and phosphoenolpyruvate: step 5/7. In terms of biological role, catalyzes the specific phosphorylation of the 3-hydroxyl group of shikimic acid using ATP as a cosubstrate. This chain is Shikimate kinase, found in Mesorhizobium japonicum (strain LMG 29417 / CECT 9101 / MAFF 303099) (Mesorhizobium loti (strain MAFF 303099)).